We begin with the raw amino-acid sequence, 212 residues long: Large ribosomal subunit protein uL3 (212 aa).

Glutamine 154 bears the N5-methylglutamine mark.

It belongs to the universal ribosomal protein uL3 family. Part of the 50S ribosomal subunit. Forms a cluster with proteins L14 and L19. Post-translationally, methylated by PrmB.

Its function is as follows. One of the primary rRNA binding proteins, it binds directly near the 3'-end of the 23S rRNA, where it nucleates assembly of the 50S subunit. The sequence is that of Large ribosomal subunit protein uL3 from Hydrogenovibrio crunogenus (strain DSM 25203 / XCL-2) (Thiomicrospira crunogena).